The primary structure comprises 333 residues: Tetraacyldisaccharide 4'-kinase (333 aa).

55–62 serves as a coordination point for ATP; the sequence is TAGGNGKT.

It belongs to the LpxK family.

It catalyses the reaction a lipid A disaccharide + ATP = a lipid IVA + ADP + H(+). Its pathway is glycolipid biosynthesis; lipid IV(A) biosynthesis; lipid IV(A) from (3R)-3-hydroxytetradecanoyl-[acyl-carrier-protein] and UDP-N-acetyl-alpha-D-glucosamine: step 6/6. In terms of biological role, transfers the gamma-phosphate of ATP to the 4'-position of a tetraacyldisaccharide 1-phosphate intermediate (termed DS-1-P) to form tetraacyldisaccharide 1,4'-bis-phosphate (lipid IVA). This chain is Tetraacyldisaccharide 4'-kinase, found in Pectobacterium atrosepticum (strain SCRI 1043 / ATCC BAA-672) (Erwinia carotovora subsp. atroseptica).